The chain runs to 98 residues: Plastocyanin (98 aa).

A Plastocyanin-like domain is found at 1 to 98 (AQIVKLGGDD…AGMKMTITVQ (98 aa)). H38, C83, H86, and M91 together coordinate Cu(2+).

The protein belongs to the plastocyanin family. The cofactor is Cu(2+).

The protein localises to the plastid. The protein resides in the chloroplast thylakoid membrane. Its function is as follows. Participates in electron transfer between P700 and the cytochrome b6-f complex in photosystem I. Has antiviral activity against Potato virus Y (strain N). The polypeptide is Plastocyanin (PETE) (Ulva pertusa (Sea lettuce)).